A 183-amino-acid polypeptide reads, in one-letter code: Putative 3-methyladenine DNA glycosylase (183 aa).

This sequence belongs to the DNA glycosylase MPG family.

The polypeptide is Putative 3-methyladenine DNA glycosylase (Legionella pneumophila (strain Lens)).